We begin with the raw amino-acid sequence, 152 residues long: UPF0225 protein YchJ (152 aa).

It belongs to the UPF0225 family.

In Shigella flexneri serotype 5b (strain 8401), this protein is UPF0225 protein YchJ.